The sequence spans 144 residues: Maximins 9/H3 (144 aa).

The first 18 residues, 1 to 18 (MNFKYIVAVSFLIASAYA), serve as a signal peptide directing secretion. A propeptide spanning residues 19–43 (RSVKNDEQSLSQRDVLEEESLREIR) is cleaved from the precursor. Y70 is subject to Tyrosine amide. A propeptide spanning residues 74–123 (TAEEHEVMKRLEAIMRDLDSLDHPEEASERETRGFNQDEIANLFTKKEKR) is cleaved from the precursor. I143 carries the isoleucine amide modification.

Belongs to the bombinin family. As to expression, expressed by the skin glands.

It localises to the secreted. Functionally, maximin-9 shows antimicrobial activity against bacteria and against the fungus C.albicans. It has little hemolytic activity. Its function is as follows. Maximin-H3 shows antibacterial activity against both Gram-positive and Gram-negative bacteria. It also shows antimicrobial activity against the fungus C.albicans. Shows strong hemolytic activity. In Bombina maxima (Giant fire-bellied toad), this protein is Maximins 9/H3.